A 522-amino-acid polypeptide reads, in one-letter code: Pectinesterase/pectinesterase inhibitor PPE8B (522 aa).

An N-terminal signal peptide occupies residues 1–30 (MPYLLMASHNPLPAGKQLLLLVLLCAFFSS). The tract at residues 31–174 (SFIPFASCSI…TSLVQELLTQ (144 aa)) is pectinesterase inhibitor PPE8B. N-linked (GlcNAc...) asparagine glycosylation is found at N105, N118, N119, N218, N221, and N274. Residues 208–506 (DAIVAQDGTG…YTVAQFIEGN (299 aa)) form a pectinesterase PPE8B region. The substrate site is built by T283 and Q313. D336 serves as the catalytic Proton donor; for pectinesterase activity. A disulfide bridge connects residues C350 and C370. D357 serves as the catalytic Nucleophile; for pectinesterase activity. The N-linked (GlcNAc...) asparagine glycan is linked to N405. Residues R426 and W428 each contribute to the substrate site. N-linked (GlcNAc...) asparagine glycans are attached at residues N489 and N496.

The protein in the N-terminal section; belongs to the PMEI family. It in the C-terminal section; belongs to the pectinesterase family.

Its subcellular location is the secreted. It localises to the cell wall. The enzyme catalyses [(1-&gt;4)-alpha-D-galacturonosyl methyl ester](n) + n H2O = [(1-&gt;4)-alpha-D-galacturonosyl](n) + n methanol + n H(+). It participates in glycan metabolism; pectin degradation; 2-dehydro-3-deoxy-D-gluconate from pectin: step 1/5. Its function is as follows. May have roles in the deposition of pectin in developing tissues and in the wall loosening and cell separation that occurs in cell expansion, fruit ripening and abscission. This is Pectinesterase/pectinesterase inhibitor PPE8B from Prunus persica (Peach).